Reading from the N-terminus, the 156-residue chain is Small ribosomal subunit protein uS7c (156 aa).

This sequence belongs to the universal ribosomal protein uS7 family. Part of the 30S ribosomal subunit.

Its subcellular location is the plastid. It is found in the chloroplast. Its function is as follows. One of the primary rRNA binding proteins, it binds directly to 16S rRNA where it nucleates assembly of the head domain of the 30S subunit. The polypeptide is Small ribosomal subunit protein uS7c (rps7) (Rhodomonas salina (Cryptomonas salina)).